The primary structure comprises 340 residues: tRNA N6-adenosine threonylcarbamoyltransferase (340 aa).

2 residues coordinate Fe cation: His-111 and His-115. Substrate-binding positions include 133-137 (VVSGG), Asp-166, Gly-179, Asp-183, and Asn-272. Position 300 (Asp-300) interacts with Fe cation.

The protein belongs to the KAE1 / TsaD family. Fe(2+) is required as a cofactor.

The protein localises to the cytoplasm. It catalyses the reaction L-threonylcarbamoyladenylate + adenosine(37) in tRNA = N(6)-L-threonylcarbamoyladenosine(37) in tRNA + AMP + H(+). In terms of biological role, required for the formation of a threonylcarbamoyl group on adenosine at position 37 (t(6)A37) in tRNAs that read codons beginning with adenine. Is involved in the transfer of the threonylcarbamoyl moiety of threonylcarbamoyl-AMP (TC-AMP) to the N6 group of A37, together with TsaE and TsaB. TsaD likely plays a direct catalytic role in this reaction. This is tRNA N6-adenosine threonylcarbamoyltransferase from Geobacter sulfurreducens (strain ATCC 51573 / DSM 12127 / PCA).